Here is a 205-residue protein sequence, read N- to C-terminus: Thiamine-phosphate synthase (205 aa).

Residues Gln35 to Lys39 and Asn67 each bind 4-amino-2-methyl-5-(diphosphooxymethyl)pyrimidine. Positions 68 and 86 each coordinate Mg(2+). Thr105 provides a ligand contact to 4-amino-2-methyl-5-(diphosphooxymethyl)pyrimidine. Ser132–Thr134 contacts 2-[(2R,5Z)-2-carboxy-4-methylthiazol-5(2H)-ylidene]ethyl phosphate. Lys135 provides a ligand contact to 4-amino-2-methyl-5-(diphosphooxymethyl)pyrimidine. Gly162 contributes to the 2-[(2R,5Z)-2-carboxy-4-methylthiazol-5(2H)-ylidene]ethyl phosphate binding site.

This sequence belongs to the thiamine-phosphate synthase family. The cofactor is Mg(2+).

The catalysed reaction is 2-[(2R,5Z)-2-carboxy-4-methylthiazol-5(2H)-ylidene]ethyl phosphate + 4-amino-2-methyl-5-(diphosphooxymethyl)pyrimidine + 2 H(+) = thiamine phosphate + CO2 + diphosphate. It catalyses the reaction 2-(2-carboxy-4-methylthiazol-5-yl)ethyl phosphate + 4-amino-2-methyl-5-(diphosphooxymethyl)pyrimidine + 2 H(+) = thiamine phosphate + CO2 + diphosphate. The enzyme catalyses 4-methyl-5-(2-phosphooxyethyl)-thiazole + 4-amino-2-methyl-5-(diphosphooxymethyl)pyrimidine + H(+) = thiamine phosphate + diphosphate. Its pathway is cofactor biosynthesis; thiamine diphosphate biosynthesis; thiamine phosphate from 4-amino-2-methyl-5-diphosphomethylpyrimidine and 4-methyl-5-(2-phosphoethyl)-thiazole: step 1/1. Condenses 4-methyl-5-(beta-hydroxyethyl)thiazole monophosphate (THZ-P) and 2-methyl-4-amino-5-hydroxymethyl pyrimidine pyrophosphate (HMP-PP) to form thiamine monophosphate (TMP). In Pseudomonas syringae pv. syringae (strain B728a), this protein is Thiamine-phosphate synthase.